Here is a 360-residue protein sequence, read N- to C-terminus: Phospho-N-acetylmuramoyl-pentapeptide-transferase (360 aa).

The next 10 helical transmembrane spans lie at 25 to 45 (RGILGVLTALVLSLWMGPWLI), 74 to 94 (MGGALILSAIGISTLLWADLA), 97 to 117 (YVWVVLAVTLLFGAIGWVDDY), 132 to 152 (WKYFWQSVFGLGAAIFLYMTA), 168 to 188 (IEIPLGIGFVILTYFVIVGSS), 199 to 219 (GLAIMPTVMVGGGLGIFCYLS), 236 to 256 (SGELIVFCGALIGAGLGFLWF), 263 to 283 (VFMGDVGALALGAALGTIAVI), 288 to 308 (VVLFIMGGVFVMETLSVMIQV), and 338 to 358 (VIVRFWIITVILVLVGLATLK).

The protein belongs to the glycosyltransferase 4 family. MraY subfamily. Requires Mg(2+) as cofactor.

It localises to the cell inner membrane. It catalyses the reaction UDP-N-acetyl-alpha-D-muramoyl-L-alanyl-gamma-D-glutamyl-meso-2,6-diaminopimeloyl-D-alanyl-D-alanine + di-trans,octa-cis-undecaprenyl phosphate = di-trans,octa-cis-undecaprenyl diphospho-N-acetyl-alpha-D-muramoyl-L-alanyl-D-glutamyl-meso-2,6-diaminopimeloyl-D-alanyl-D-alanine + UMP. The protein operates within cell wall biogenesis; peptidoglycan biosynthesis. Catalyzes the initial step of the lipid cycle reactions in the biosynthesis of the cell wall peptidoglycan: transfers peptidoglycan precursor phospho-MurNAc-pentapeptide from UDP-MurNAc-pentapeptide onto the lipid carrier undecaprenyl phosphate, yielding undecaprenyl-pyrophosphoryl-MurNAc-pentapeptide, known as lipid I. The chain is Phospho-N-acetylmuramoyl-pentapeptide-transferase from Stutzerimonas stutzeri (strain A1501) (Pseudomonas stutzeri).